A 388-amino-acid chain; its full sequence is MRYLTSGESHGPQLTVIVEGVPANIEIKVEDINKEMFKRQGGYGRGRRMQIEKDTVEIVSGVRNGYTLGSPITMVVTNDDFTHWRKIMGAAPISEEERENMKRTITKPRPGHADLVGGMKYNHRDLRNVLERSSARETAARVAVGALCKVLLQQLDIDIYSRVVEIGGIKDKDFYDSETFKANLDRNDVRVIDDSIAQAMRDKIDEAKNEGDSIGGVVQVVVENMPVGVGSYVHYDRKLDGKIAQGVVSINAFKGVSFGEGFKAAEKPGSEIQDEILYNSEIGYYRGSNHLGGLEGGMSNGMPIIVNGVMKPIPTLYKPLNSVDINTKEDFKATIERSDSCAVPAASIVCEHVVAFEIAKALLEEFQSNHIEQLKQQIIERRQLNIEF.

Positions 39 and 45 each coordinate NADP(+). Residues Arg-132–Ser-134, Asn-251–Ala-252, Gly-296, Lys-311–Thr-315, and Arg-337 contribute to the FMN site.

This sequence belongs to the chorismate synthase family. In terms of assembly, homotetramer. It depends on FMNH2 as a cofactor.

It carries out the reaction 5-O-(1-carboxyvinyl)-3-phosphoshikimate = chorismate + phosphate. Its pathway is metabolic intermediate biosynthesis; chorismate biosynthesis; chorismate from D-erythrose 4-phosphate and phosphoenolpyruvate: step 7/7. Functionally, catalyzes the anti-1,4-elimination of the C-3 phosphate and the C-6 proR hydrogen from 5-enolpyruvylshikimate-3-phosphate (EPSP) to yield chorismate, which is the branch point compound that serves as the starting substrate for the three terminal pathways of aromatic amino acid biosynthesis. This reaction introduces a second double bond into the aromatic ring system. The chain is Chorismate synthase from Staphylococcus aureus (strain COL).